The following is a 169-amino-acid chain: Sorting nexin-24 (169 aa).

At M1 the chain carries N-acetylmethionine. One can recognise a PX domain in the interval 1–125; sequence MEVYIPSFRH…SFDETESEES (125 aa). Residues R38, S40, K61, and R74 each coordinate a 1,2-diacyl-sn-glycero-3-phospho-(1D-myo-inositol-3-phosphate). Phosphoserine occurs at positions 113 and 116.

It belongs to the sorting nexin family.

It is found in the cytoplasmic vesicle membrane. Functionally, may be involved in several stages of intracellular trafficking. The polypeptide is Sorting nexin-24 (Snx24) (Rattus norvegicus (Rat)).